Reading from the N-terminus, the 510-residue chain is ATP synthase subunit alpha, chloroplastic (510 aa).

Position 170–177 (170–177) interacts with ATP; sequence GDRQTGKT.

Belongs to the ATPase alpha/beta chains family. In terms of assembly, F-type ATPases have 2 components, CF(1) - the catalytic core - and CF(0) - the membrane proton channel. CF(1) has five subunits: alpha(3), beta(3), gamma(1), delta(1), epsilon(1). CF(0) has four main subunits: a, b, b' and c.

The protein localises to the plastid. Its subcellular location is the chloroplast thylakoid membrane. It catalyses the reaction ATP + H2O + 4 H(+)(in) = ADP + phosphate + 5 H(+)(out). Produces ATP from ADP in the presence of a proton gradient across the membrane. The alpha chain is a regulatory subunit. The protein is ATP synthase subunit alpha, chloroplastic of Phaseolus vulgaris (Kidney bean).